The primary structure comprises 204 residues: Urease accessory protein UreG (204 aa).

Position 11–18 (11–18) interacts with GTP; sequence GPVGAGKT.

The protein belongs to the SIMIBI class G3E GTPase family. UreG subfamily. In terms of assembly, homodimer. UreD, UreF and UreG form a complex that acts as a GTP-hydrolysis-dependent molecular chaperone, activating the urease apoprotein by helping to assemble the nickel containing metallocenter of UreC. The UreE protein probably delivers the nickel.

The protein localises to the cytoplasm. Its function is as follows. Facilitates the functional incorporation of the urease nickel metallocenter. This process requires GTP hydrolysis, probably effectuated by UreG. This chain is Urease accessory protein UreG, found in Staphylococcus aureus (strain MSSA476).